Here is a 269-residue protein sequence, read N- to C-terminus: 4-hydroxy-tetrahydrodipicolinate reductase (269 aa).

NAD(+) is bound by residues glycine 8–methionine 13 and glutamate 34. Arginine 35 contributes to the NADP(+) binding site. NAD(+) is bound by residues glycine 98–threonine 100 and alanine 122–tyrosine 125. The active-site Proton donor/acceptor is the histidine 155. (S)-2,3,4,5-tetrahydrodipicolinate is bound at residue histidine 156. Lysine 159 (proton donor) is an active-site residue. Glycine 165–threonine 166 provides a ligand contact to (S)-2,3,4,5-tetrahydrodipicolinate.

It belongs to the DapB family.

The protein localises to the cytoplasm. The catalysed reaction is (S)-2,3,4,5-tetrahydrodipicolinate + NAD(+) + H2O = (2S,4S)-4-hydroxy-2,3,4,5-tetrahydrodipicolinate + NADH + H(+). The enzyme catalyses (S)-2,3,4,5-tetrahydrodipicolinate + NADP(+) + H2O = (2S,4S)-4-hydroxy-2,3,4,5-tetrahydrodipicolinate + NADPH + H(+). The protein operates within amino-acid biosynthesis; L-lysine biosynthesis via DAP pathway; (S)-tetrahydrodipicolinate from L-aspartate: step 4/4. Catalyzes the conversion of 4-hydroxy-tetrahydrodipicolinate (HTPA) to tetrahydrodipicolinate. This Vibrio campbellii (strain ATCC BAA-1116) protein is 4-hydroxy-tetrahydrodipicolinate reductase.